Consider the following 347-residue polypeptide: GMP reductase (347 aa).

Residue Ala108–Ala131 coordinates NADP(+). K(+) is bound by residues Gly181 and Gly183. The active-site Thioimidate intermediate is the Cys186. Residue Ile216–Val239 coordinates NADP(+).

This sequence belongs to the IMPDH/GMPR family. GuaC type 1 subfamily. As to quaternary structure, homotetramer.

The enzyme catalyses IMP + NH4(+) + NADP(+) = GMP + NADPH + 2 H(+). Functionally, catalyzes the irreversible NADPH-dependent deamination of GMP to IMP. It functions in the conversion of nucleobase, nucleoside and nucleotide derivatives of G to A nucleotides, and in maintaining the intracellular balance of A and G nucleotides. This chain is GMP reductase, found in Salmonella choleraesuis (strain SC-B67).